A 901-amino-acid polypeptide reads, in one-letter code: Aconitate hydratase A (901 aa).

The [4Fe-4S] cluster site is built by Cys-443, Cys-509, and Cys-512.

Belongs to the aconitase/IPM isomerase family. In terms of assembly, monomer. Requires [4Fe-4S] cluster as cofactor.

The enzyme catalyses citrate = D-threo-isocitrate. It carries out the reaction (2S,3R)-3-hydroxybutane-1,2,3-tricarboxylate = 2-methyl-cis-aconitate + H2O. Its pathway is carbohydrate metabolism; tricarboxylic acid cycle; isocitrate from oxaloacetate: step 2/2. It participates in organic acid metabolism; propanoate degradation. In terms of biological role, involved in the catabolism of short chain fatty acids (SCFA) via the tricarboxylic acid (TCA)(acetyl degradation route) and probably the 2-methylcitrate cycle I (propionate degradation route). Catalyzes the reversible isomerization of citrate to isocitrate via cis-aconitate. Could catalyze the hydration of 2-methyl-cis-aconitate to yield (2R,3S)-2-methylisocitrate. The apo form of AcnA functions as a RNA-binding regulatory protein. The protein is Aconitate hydratase A (acnA) of Staphylococcus epidermidis (strain ATCC 12228 / FDA PCI 1200).